A 277-amino-acid polypeptide reads, in one-letter code: NADPH-dependent 7-cyano-7-deazaguanine reductase (277 aa).

83–85 (VES) lines the substrate pocket. Residue 85–86 (SK) participates in NADPH binding. The active-site Thioimide intermediate is Cys184. Residue Asp191 is the Proton donor of the active site. 223-224 (HE) contacts substrate. 252–253 (RG) lines the NADPH pocket.

This sequence belongs to the GTP cyclohydrolase I family. QueF type 2 subfamily. Homodimer.

The protein resides in the cytoplasm. The enzyme catalyses 7-aminomethyl-7-carbaguanine + 2 NADP(+) = 7-cyano-7-deazaguanine + 2 NADPH + 3 H(+). It participates in tRNA modification; tRNA-queuosine biosynthesis. In terms of biological role, catalyzes the NADPH-dependent reduction of 7-cyano-7-deazaguanine (preQ0) to 7-aminomethyl-7-deazaguanine (preQ1). This is NADPH-dependent 7-cyano-7-deazaguanine reductase from Cupriavidus taiwanensis (strain DSM 17343 / BCRC 17206 / CCUG 44338 / CIP 107171 / LMG 19424 / R1) (Ralstonia taiwanensis (strain LMG 19424)).